The sequence spans 205 residues: Small ribosomal subunit protein uS4 (205 aa).

Positions 1 to 16 (MSKRESSKYKIDRRMG) are enriched in basic and acidic residues. Residues 1-46 (MSKRESSKYKIDRRMGENIWGRPKSPVNRREYGPGQHGQRRKGKLS) form a disordered region. In terms of domain architecture, S4 RNA-binding spans 94–157 (SRLDAIVYRA…KQLVIVLEAV (64 aa)).

This sequence belongs to the universal ribosomal protein uS4 family. In terms of assembly, part of the 30S ribosomal subunit. Contacts protein S5. The interaction surface between S4 and S5 is involved in control of translational fidelity.

Its function is as follows. One of the primary rRNA binding proteins, it binds directly to 16S rRNA where it nucleates assembly of the body of the 30S subunit. Functionally, with S5 and S12 plays an important role in translational accuracy. This is Small ribosomal subunit protein uS4 from Rhizobium leguminosarum bv. trifolii (strain WSM2304).